Reading from the N-terminus, the 263-residue chain is 4-hydroxy-tetrahydrodipicolinate reductase (263 aa).

Residues 8-13 (GACGRM), D34, 99-101 (GTT), and 125-128 (SPNY) each bind NAD(+). The active-site Proton donor/acceptor is the H157. H158 is a binding site for (S)-2,3,4,5-tetrahydrodipicolinate. K161 serves as the catalytic Proton donor. Residue 167-168 (GT) coordinates (S)-2,3,4,5-tetrahydrodipicolinate.

This sequence belongs to the DapB family.

It is found in the cytoplasm. It carries out the reaction (S)-2,3,4,5-tetrahydrodipicolinate + NAD(+) + H2O = (2S,4S)-4-hydroxy-2,3,4,5-tetrahydrodipicolinate + NADH + H(+). It catalyses the reaction (S)-2,3,4,5-tetrahydrodipicolinate + NADP(+) + H2O = (2S,4S)-4-hydroxy-2,3,4,5-tetrahydrodipicolinate + NADPH + H(+). It functions in the pathway amino-acid biosynthesis; L-lysine biosynthesis via DAP pathway; (S)-tetrahydrodipicolinate from L-aspartate: step 4/4. Its function is as follows. Catalyzes the conversion of 4-hydroxy-tetrahydrodipicolinate (HTPA) to tetrahydrodipicolinate. This is 4-hydroxy-tetrahydrodipicolinate reductase from Methanosarcina mazei (strain ATCC BAA-159 / DSM 3647 / Goe1 / Go1 / JCM 11833 / OCM 88) (Methanosarcina frisia).